A 238-amino-acid polypeptide reads, in one-letter code: Small ribosomal subunit protein eS4 (238 aa).

The 73-residue stretch at 38-110 (LPLAIIIRDV…EKKYYALIPI (73 aa)) folds into the S4 RNA-binding domain.

It belongs to the eukaryotic ribosomal protein eS4 family.

The protein is Small ribosomal subunit protein eS4 of Pyrobaculum islandicum (strain DSM 4184 / JCM 9189 / GEO3).